The sequence spans 364 residues: Protein Bop (364 aa).

Residues 66–88 (STASGTCGGKPAERGPLAGHMPS) are disordered. A BH3 motif is present at residues 114–128 (LDRFLAQLGDYMSFH). The interval 258-364 (QLTKESTPGP…PGEPPLSPGF (107 aa)) is disordered. Pro residues-rich tracts occupy residues 311 to 322 (AQRPDPAHPGGP) and 355 to 364 (PGEPPLSPGF).

In terms of assembly, interacts (via BH3 domain) with VDAC1. Interacts with pro-survival Bcl-2 family members, BCL2, BCL2L1 isoform Bcl-X(L), MCL1, BCL2A1 and BCL2L2. Interacts with BAX and BAK1. As to expression, ubiquitously expressed.

The protein resides in the mitochondrion. In terms of biological role, could induce apoptosis in a BH3 domain-dependent manner. The direct interaction network of Bcl-2 family members may play a key role in modulation RTL10/BOP intrinsic apoptotic signaling activity. The sequence is that of Protein Bop from Homo sapiens (Human).